Here is a 195-residue protein sequence, read N- to C-terminus: Calcineurin B homologous protein 1 (195 aa).

A lipid anchor (N-myristoyl glycine) is attached at glycine 2. Residues 2–6 (GSRAS) carry the Necessary for association with microtubule and interaction with GAPDH motif. 4 EF-hand domains span residues 26 to 61 (SQITRLYSRFTSLDKGENGTLSREDFQRIPELAINP), 71 to 106 (FSEGEDQVNFRGFMRTLAHFRPIEDNEKSKDVNGPE), 110 to 145 (SRSNKLHFAFRLYDLDKDDKISRDELLQVLRMMVGV), and 151 to 186 (QLGSIADRTIQEADQDGDSAISFTEFVKVLEKVDVE). Residues aspartate 123, aspartate 125, aspartate 127, lysine 129, and glutamate 134 each contribute to the Ca(2+) site. A Nuclear export signal 1 motif is present at residues 138-147 (VLRMMVGVNI). Residues aspartate 164, aspartate 166, aspartate 168, and glutamate 175 each contribute to the Ca(2+) site. The Nuclear export signal 2 signature appears at 176–185 (FVKVLEKVDV).

This sequence belongs to the calcineurin regulatory subunit family. CHP subfamily. Monomer. Interacts with STK17B; the interaction occurs in a calcium-independent manner and induces the translocation of CHP1 from the Golgi to the nucleus. Interacts with GAPDH; the interaction is direct, occurs in a N-myristoylation-dependent manner and facilitates the ability of CHP1 to bind microtubules. Interacts with KIF1B (via the C-terminal end of the kinesin-motor domain); the interaction occurs in a calcium-dependent manner. Associates (via C-terminal domain) with microtubules; the association occurs with polymerized microtubules during the cell cycle in a myristoylation- and calcium-independent manner and is enhanced by GAPDH. Interacts with PPP3CA. Interacts with SLC9A1/NHE1 (via the cytoplasmic C-terminal domain); the interaction occurs at the plasma membrane in a calcium-dependent manner and at a domain that is critical for growth factor stimulation of the exchanger. Interacts with SLC9A3; increases SLC9A3 trafficking and activity at the plasma membrane. In terms of processing, phosphorylated; decreased phosphorylation is associated with an increase in SLC9A1/NHE1 Na(+)/H(+) exchange activity. Phosphorylation occurs in serum-dependent manner. The phosphorylation state may regulate the binding to SLC9A1/NHE1. Post-translationally, both N-myristoylation and calcium-mediated conformational changes are essential for its function in exocytic traffic. N-myristoylation is required for its association with microtubules and interaction with GAPDH, but not for the constitutive association to membranes.

It localises to the nucleus. The protein resides in the cytoplasm. The protein localises to the cytoskeleton. It is found in the endomembrane system. Its subcellular location is the endoplasmic reticulum-Golgi intermediate compartment. It localises to the endoplasmic reticulum. The protein resides in the cell membrane. The protein localises to the membrane. Functionally, calcium-binding protein involved in different processes such as regulation of vesicular trafficking, plasma membrane Na(+)/H(+) exchanger and gene transcription. Involved in the constitutive exocytic membrane traffic. Mediates the association between microtubules and membrane-bound organelles of the endoplasmic reticulum and Golgi apparatus and is also required for the targeting and fusion of transcytotic vesicles (TCV) with the plasma membrane. Functions as an integral cofactor in cell pH regulation by controlling plasma membrane-type Na(+)/H(+) exchange activity. Affects the pH sensitivity of SLC9A1/NHE1 by increasing its sensitivity at acidic pH. Required for the stabilization and localization of SLC9A1/NHE1 at the plasma membranes. Inhibits serum- and GTPase-stimulated Na(+)/H(+) exchange. Plays a role as an inhibitor of ribosomal RNA transcription by repressing the nucleolar UBF1 transcriptional activity. May sequester UBF1 in the nucleoplasm and limit its translocation to the nucleolus. Associates to the ribosomal gene promoter. Acts as a negative regulator of the calcineurin/NFAT signaling pathway. Inhibits NFAT nuclear translocation and transcriptional activity by suppressing the calcium-dependent calcineurin phosphatase activity. Also negatively regulates the kinase activity of the apoptosis-induced kinase STK17B. Inhibits both STK17B auto- and substrate-phosphorylations in a calcium-dependent manner. In Mus musculus (Mouse), this protein is Calcineurin B homologous protein 1 (Chp1).